We begin with the raw amino-acid sequence, 979 residues long: Glutamate receptor ionotropic, kainate 5 (979 aa).

The signal sequence occupies residues 1–14 (MPAELLLLLIVAFA). Residues 15–544 (NPSCQVLSSL…YFSFLDPFSP (530 aa)) lie on the Extracellular side of the membrane. 3 disulfide bridges follow: Cys-36-Cys-292, Cys-83-Cys-334, and Cys-165-Cys-170. Asn-219, Asn-271, Asn-285, Asn-322, Asn-372, Asn-394, Asn-400, Asn-407, Asn-414, and Asn-478 each carry an N-linked (GlcNAc...) asparagine glycan. Residues 545–565 (AVWLFMLLAYLAVSCVLFLAA) traverse the membrane as a helical segment. Topologically, residues 566–622 (RLSPYEWYNPHPCLRARPHILENQYTLGNSLWFPVGGFMQQGSEIMPRALSTRCVSG) are cytoplasmic. Residues 623–643 (VWWAFTLIIISSYTANLAAFL) form a helical membrane-spanning segment. Topologically, residues 644–803 (TVQRMEVPVE…HRAKGLGMEN (160 aa)) are extracellular. A glycan (N-linked (GlcNAc...) asparagine) is linked at Asn-735. Residues 804–824 (IGGIFVVLICGLIIAVFVAVM) form a helical membrane-spanning segment. Residues 825–979 (EFIWSTRRSA…TGPRELTEHE (155 aa)) are Cytoplasmic-facing. Basic residues predominate over residues 856–867 (RKTSRSRRRRRP). Disordered stretches follow at residues 856–875 (RKTS…RALL), 890–925 (LYSA…APTP), and 942–979 (RASG…TEHE). The span at 894 to 903 (GAGGDAGAHG) shows a compositional bias: gly residues. The segment covering 912-923 (PGPPGGPRPQAP) has biased composition (pro residues).

This sequence belongs to the glutamate-gated ion channel (TC 1.A.10.1) family. GRIK5 subfamily. Homotetramer. Heterotetramer with GRIK2. Can form functional heteromeric receptors with GRIK1, GRIK2 and GRIK3. Forms a heteromeric complex with GRIK2. In terms of tissue distribution, expressed in the hippocampal mossy fiber synapses (at protein level).

The protein localises to the cell membrane. The protein resides in the postsynaptic cell membrane. It is found in the presynaptic cell membrane. Its function is as follows. Ionotropic glutamate receptor that functions as a cation-permeable ligand-gated ion channel, gated by L-glutamate and the glutamatergic agonist kainic acid. Cannot form functional channels on its own and produces channel activity only in heteromeric assembly with GRIK2 subunit. Can form functional heteromeric receptors with GRIK1 and GRIK3. The sequence is that of Glutamate receptor ionotropic, kainate 5 (Grik5) from Mus musculus (Mouse).